We begin with the raw amino-acid sequence, 267 residues long: Beta-lactamase OXA-5 (267 aa).

The signal sequence occupies residues 1-19 (MKTIAAYLVLVFYASTALS). Ser67 acts as the Acyl-ester intermediate in catalysis. An N6-carboxylysine modification is found at Lys70. Residue 205-207 (KTG) participates in substrate binding.

This sequence belongs to the class-D beta-lactamase family.

The catalysed reaction is a beta-lactam + H2O = a substituted beta-amino acid. Inhibited by clavulanic acid. Functionally, hydrolyzes both oxacillin and methicillin. This Pseudomonas aeruginosa protein is Beta-lactamase OXA-5 (bla).